Here is a 441-residue protein sequence, read N- to C-terminus: Ribosomal protein uS12 methylthiotransferase RimO (441 aa).

An MTTase N-terminal domain is found at 8–118 (PKIGFVSLGC…VLEHVHHYVP (111 aa)). Positions 17, 53, 82, 150, 154, and 157 each coordinate [4Fe-4S] cluster. Positions 136 to 373 (LTPRHYAYLK…MQLQQQISAE (238 aa)) constitute a Radical SAM core domain. A TRAM domain is found at 376-441 (QEKVGKEILV…DEYDLWGSRV (66 aa)).

This sequence belongs to the methylthiotransferase family. RimO subfamily. Requires [4Fe-4S] cluster as cofactor.

Its subcellular location is the cytoplasm. The enzyme catalyses L-aspartate(89)-[ribosomal protein uS12]-hydrogen + (sulfur carrier)-SH + AH2 + 2 S-adenosyl-L-methionine = 3-methylsulfanyl-L-aspartate(89)-[ribosomal protein uS12]-hydrogen + (sulfur carrier)-H + 5'-deoxyadenosine + L-methionine + A + S-adenosyl-L-homocysteine + 2 H(+). Functionally, catalyzes the methylthiolation of an aspartic acid residue of ribosomal protein uS12. This chain is Ribosomal protein uS12 methylthiotransferase RimO, found in Escherichia fergusonii (strain ATCC 35469 / DSM 13698 / CCUG 18766 / IAM 14443 / JCM 21226 / LMG 7866 / NBRC 102419 / NCTC 12128 / CDC 0568-73).